A 94-amino-acid polypeptide reads, in one-letter code: Co-chaperonin GroES (94 aa).

This sequence belongs to the GroES chaperonin family. As to quaternary structure, heptamer of 7 subunits arranged in a ring. Interacts with the chaperonin GroEL.

It is found in the cytoplasm. Functionally, together with the chaperonin GroEL, plays an essential role in assisting protein folding. The GroEL-GroES system forms a nano-cage that allows encapsulation of the non-native substrate proteins and provides a physical environment optimized to promote and accelerate protein folding. GroES binds to the apical surface of the GroEL ring, thereby capping the opening of the GroEL channel. This is Co-chaperonin GroES from Streptococcus mitis.